The chain runs to 555 residues: Urocanate hydratase (555 aa).

NAD(+) is bound by residues Gly-51–Gly-52, Gln-129, Gly-175–Gly-177, Glu-195, Gln-262–His-266, Tyr-272–Leu-273, and Tyr-321. Residue Cys-409 is part of the active site. Gly-491 contacts NAD(+).

It belongs to the urocanase family. NAD(+) serves as cofactor.

Its subcellular location is the cytoplasm. The enzyme catalyses 4-imidazolone-5-propanoate = trans-urocanate + H2O. The protein operates within amino-acid degradation; L-histidine degradation into L-glutamate; N-formimidoyl-L-glutamate from L-histidine: step 2/3. In terms of biological role, catalyzes the conversion of urocanate to 4-imidazolone-5-propionate. The sequence is that of Urocanate hydratase from Stenotrophomonas maltophilia (strain R551-3).